The sequence spans 243 residues: tRNA (guanine-N(1)-)-methyltransferase (243 aa).

S-adenosyl-L-methionine-binding positions include Gly111 and 131–136 (IGDYVL).

The protein belongs to the RNA methyltransferase TrmD family. As to quaternary structure, homodimer.

The protein resides in the cytoplasm. It catalyses the reaction guanosine(37) in tRNA + S-adenosyl-L-methionine = N(1)-methylguanosine(37) in tRNA + S-adenosyl-L-homocysteine + H(+). Specifically methylates guanosine-37 in various tRNAs. The polypeptide is tRNA (guanine-N(1)-)-methyltransferase (Brevibacillus brevis (strain 47 / JCM 6285 / NBRC 100599)).